The primary structure comprises 457 residues: tRNA-2-methylthio-N(6)-dimethylallyladenosine synthase (457 aa).

An MTTase N-terminal domain is found at 3 to 120 (KKVYVKTFGC…LPQMIDARRE (118 aa)). Residues Cys12, Cys49, Cys83, Cys157, Cys161, and Cys164 each coordinate [4Fe-4S] cluster. Residues 143-377 (RVEGPSAFVS…QATIEENVAR (235 aa)) form the Radical SAM core domain. In terms of domain architecture, TRAM spans 380 to 447 (QSMLGKVERI…PHSLRGELVL (68 aa)).

Belongs to the methylthiotransferase family. MiaB subfamily. Monomer. [4Fe-4S] cluster is required as a cofactor.

The protein resides in the cytoplasm. The enzyme catalyses N(6)-dimethylallyladenosine(37) in tRNA + (sulfur carrier)-SH + AH2 + 2 S-adenosyl-L-methionine = 2-methylsulfanyl-N(6)-dimethylallyladenosine(37) in tRNA + (sulfur carrier)-H + 5'-deoxyadenosine + L-methionine + A + S-adenosyl-L-homocysteine + 2 H(+). Its function is as follows. Catalyzes the methylthiolation of N6-(dimethylallyl)adenosine (i(6)A), leading to the formation of 2-methylthio-N6-(dimethylallyl)adenosine (ms(2)i(6)A) at position 37 in tRNAs that read codons beginning with uridine. This Burkholderia mallei (strain NCTC 10247) protein is tRNA-2-methylthio-N(6)-dimethylallyladenosine synthase.